A 285-amino-acid chain; its full sequence is Taffazin (285 aa).

Residues 1–23 are Mitochondrial intermembrane-facing; sequence MDSNNSNNNNKNLKQICDIPKPQ. The stretch at 24–42 is an intramembrane region; that stretch reads FLSKGVFTLVGVLCKFWIS. Residues 43–285 lie on the Mitochondrial intermembrane side of the membrane; it reads MNTVTTSGID…GRFSHPTIKD (243 aa). An HXXXXD motif motif is present at residues 74–79; the sequence is HSSNLD.

This sequence belongs to the taffazin family.

Its subcellular location is the mitochondrion outer membrane. It localises to the mitochondrion inner membrane. The catalysed reaction is a 1-acyl-sn-glycero-3-phosphate + a 1,2-diacyl-sn-glycero-3-phospho-(1'-sn-glycerol) = 1-acyl-sn-glycero-3-phospho-(1'-sn-glycerol) + a 1,2-diacyl-sn-glycero-3-phosphate. The enzyme catalyses 1-hexadecanoyl-2-(9Z,12Z-octadecadienoyl)-sn-glycero-3-phospho-(1'-sn-glycerol) + 1-(9Z-octadecenoyl)-sn-glycero-3-phosphate = 1-(9Z)-octadecenoyl-2-(9Z,12Z)-octadecadienoyl-sn-glycero-3-phosphate + 1-hexadecanoyl-sn-glycero-3-phospho-(1'-sn-glycerol). It carries out the reaction 1'-[1,2-diacyl-sn-glycero-3-phospho],3'-[1-acyl-sn-glycero-3-phospho]-glycerol + a 1,2-diacyl-sn-glycero-3-phosphocholine = a cardiolipin + a 1-acyl-sn-glycero-3-phosphocholine. It catalyses the reaction 1-hexadecanoyl-2-(9Z,12Z-octadecadienoyl)-sn-glycero-3-phosphocholine + 1-hexadecanoyl-sn-glycero-3-phosphocholine = 2-(9Z,12Z-octadecadienoyl)-sn-glycero-3-phosphocholine + 1,2-dihexadecanoyl-sn-glycero-3-phosphocholine. The catalysed reaction is 1,2-di-(9Z-octadecenoyl)-sn-glycero-3-phosphocholine + 1-hexadecanoyl-sn-glycero-3-phosphocholine = 1-hexadecanoyl-2-(9Z-octadecenoyl)-sn-glycero-3-phosphocholine + 1-(9Z-octadecenoyl)-sn-glycero-3-phosphocholine. The protein operates within phospholipid metabolism. Functionally, acyltransferase required to remodel newly synthesized phospholipid cardiolipin (1',3'-bis-[1,2-diacyl-sn-glycero-3-phospho]-glycerol or CL), a key component of the mitochondrial inner membrane, with tissue specific acyl chains necessary for adequate mitochondrial function. Its role in cellular physiology is to improve mitochondrial performance. CL is critical for the coassembly of lipids and proteins in mitochondrial membranes, for instance, remodeling of the acyl groups of CL in the mitochondrial inner membrane affects the assembly and stability of respiratory chain complex IV and its supercomplex forms. Catalyzes the transacylation between phospholipids and lysophospholipids, with the highest rate being between phosphatidylcholine (1,2-diacyl-sn-glycero-3-phosphocholine or PC) and CL. Catalyzes both 1-acyl-sn-glycero-3-phosphocholine (lysophosphatidylcholine or LPC) reacylation and PC-CL transacylation, that means, it exchanges acyl groups between CL and PC by a combination of forward and reverse transacylations. Also catalyzes transacylations between other phospholipids such as phosphatidylethanolamine (1,2-diacyl-sn-glycero-3-phosphoethanolamine or PE) and CL, between PC and PE, and between PC and phosphatidate (1,2-diacyl-sn-glycero-3-phosphate or PA), although at lower rate. Not regiospecific, it transfers acyl groups into any of the sn-1 and sn-2 positions of the monolysocardiolipin (MLCL), which is an important prerequisite for uniformity and symmetry in CL acyl distribution. Cannot transacylate dilysocardiolipin (DLCL), thus, the role of MLCL is limited to that of an acyl acceptor. CoA-independent, it can reshuffle molecular species within a single phospholipid class. Redistributes fatty acids between MLCL, CL, and other lipids, which prolongs the half-life of CL. Its action is completely reversible, which allows for cyclic changes, such as fission and fusion or bending and flattening of the membrane. Hence, by contributing to the flexibility of the lipid composition, it plays an important role in the dynamics of mitochondria membranes. The polypeptide is Taffazin (taz) (Dictyostelium discoideum (Social amoeba)).